We begin with the raw amino-acid sequence, 361 residues long: Heme A synthase (361 aa).

8 helical membrane-spanning segments follow: residues Leu22 to Gly42, Leu109 to Gly129, Leu139 to Ser159, His175 to Pro195, Phe208 to Gly228, Phe269 to Thr289, Val303 to Val323, and Val324 to Thr344. Residue His271 participates in heme binding. Position 332 (His332) interacts with heme.

It belongs to the COX15/CtaA family. Type 2 subfamily. As to quaternary structure, interacts with CtaB. Heme b serves as cofactor.

The protein resides in the cell membrane. It catalyses the reaction Fe(II)-heme o + 2 A + H2O = Fe(II)-heme a + 2 AH2. It functions in the pathway porphyrin-containing compound metabolism; heme A biosynthesis; heme A from heme O: step 1/1. Catalyzes the conversion of heme O to heme A by two successive hydroxylations of the methyl group at C8. The first hydroxylation forms heme I, the second hydroxylation results in an unstable dihydroxymethyl group, which spontaneously dehydrates, resulting in the formyl group of heme A. This is Heme A synthase from Chelativorans sp. (strain BNC1).